The sequence spans 1112 residues: Carbamoyl phosphate synthase large chain (1112 aa).

The tract at residues 1-407 (MPRRTDLRHV…ALGKVMRSLE (407 aa)) is carboxyphosphate synthetic domain. Residues arginine 134, arginine 174, glycine 180, glycine 181, glutamate 213, isoleucine 215, glutamate 220, glycine 246, valine 247, histidine 248, glutamine 290, and glutamate 304 each coordinate ATP. In terms of domain architecture, ATP-grasp 1 spans 138-333 (KDIVTKVGGE…IAKIAAKLAI (196 aa)). Mg(2+) contacts are provided by glutamine 290, glutamate 304, and asparagine 306. Residues glutamine 290, glutamate 304, and asparagine 306 each contribute to the Mn(2+) site. The tract at residues 408 to 559 (TGRAGFWTAP…ELDPAAESEV (152 aa)) is oligomerization domain. A carbamoyl phosphate synthetic domain region spans residues 560–965 (APQAERPKVL…AFAKSQTAAY (406 aa)). The ATP-grasp 2 domain maps to 693 to 884 (GEVLRTAGLP…LAKACARIML (192 aa)). Arginine 729, arginine 768, leucine 770, glutamate 775, glycine 800, isoleucine 801, histidine 802, serine 803, glutamine 843, and glutamate 855 together coordinate ATP. Mg(2+) is bound by residues glutamine 843, glutamate 855, and asparagine 857. Glutamine 843, glutamate 855, and asparagine 857 together coordinate Mn(2+). An MGS-like domain is found at 966–1112 (GSLPSEGTVF…LQELHSELGN (147 aa)). The interval 966-1112 (GSLPSEGTVF…LQELHSELGN (147 aa)) is allosteric domain.

Belongs to the CarB family. Composed of two chains; the small (or glutamine) chain promotes the hydrolysis of glutamine to ammonia, which is used by the large (or ammonia) chain to synthesize carbamoyl phosphate. Tetramer of heterodimers (alpha,beta)4. Mg(2+) is required as a cofactor. It depends on Mn(2+) as a cofactor.

The catalysed reaction is hydrogencarbonate + L-glutamine + 2 ATP + H2O = carbamoyl phosphate + L-glutamate + 2 ADP + phosphate + 2 H(+). It carries out the reaction hydrogencarbonate + NH4(+) + 2 ATP = carbamoyl phosphate + 2 ADP + phosphate + 2 H(+). The protein operates within amino-acid biosynthesis; L-arginine biosynthesis; carbamoyl phosphate from bicarbonate: step 1/1. It functions in the pathway pyrimidine metabolism; UMP biosynthesis via de novo pathway; (S)-dihydroorotate from bicarbonate: step 1/3. Large subunit of the glutamine-dependent carbamoyl phosphate synthetase (CPSase). CPSase catalyzes the formation of carbamoyl phosphate from the ammonia moiety of glutamine, carbonate, and phosphate donated by ATP, constituting the first step of 2 biosynthetic pathways, one leading to arginine and/or urea and the other to pyrimidine nucleotides. The large subunit (synthetase) binds the substrates ammonia (free or transferred from glutamine from the small subunit), hydrogencarbonate and ATP and carries out an ATP-coupled ligase reaction, activating hydrogencarbonate by forming carboxy phosphate which reacts with ammonia to form carbamoyl phosphate. In Mycobacterium sp. (strain JLS), this protein is Carbamoyl phosphate synthase large chain.